The primary structure comprises 68 residues: Large ribosomal subunit protein uL29 (68 aa).

This sequence belongs to the universal ribosomal protein uL29 family.

The polypeptide is Large ribosomal subunit protein uL29 (Wigglesworthia glossinidia brevipalpis).